A 169-amino-acid chain; its full sequence is Mitochondrial ATP-independent inner membrane protease subunit 1b (169 aa).

Active-site residues include Ser47 and Lys91.

This sequence belongs to the peptidase S26 family. IMP1 subfamily. Heterodimer of 2 subunits, IMP1A/B and IMP12.

The protein localises to the mitochondrion inner membrane. In terms of biological role, catalyzes the removal of transit peptides required for the targeting of proteins from the mitochondrial matrix, across the inner membrane, into the inter-membrane space. The chain is Mitochondrial ATP-independent inner membrane protease subunit 1b from Arabidopsis thaliana (Mouse-ear cress).